The chain runs to 206 residues: Protein FAM228A (206 aa).

It belongs to the FAM228 family.

The chain is Protein FAM228A (FAM228A) from Homo sapiens (Human).